The sequence spans 1204 residues: MENTQKTVTVPTGPLGYVYACRVEDLDLEEISFLAARSTDSDLALLPLMRNLTVEKTFTSSLAVVSGARTTGLAGAGITLKLTTSHFYPSVFVFHGGKHVLPSSAAPNLTRACNAARERFGFSRCQGPPVDGAVETTGAEICTRLGLEPENTILYLVVTALFKEAVFMCNVFLHYGGLDIVHINHGDVIRIPLFPVQLFMPDVNRLVPDPFNTHHRSIGEGFVYPTPFYNTGLCHLIHDCVIAPMAVALRVRNVTAVARGAAHLAFDENHEGAVLPPDITYTYFQSSSSGTTTARGARRNDVNSTSKPSPSGGFERRLASIMAADTALHAEVIFNTGIYEETPTDIKEWPMFIGMEGTLPRLNALGSYTARVAGVIGAMVFSPNSALYLTEVEDSGMTEAKDGGPGPSFNRFYQFAGPHLAANPQTDRDGHVLSSQSTGSSNTEFSVDYLALICGFGAPLLARLLFYLERCDAGAFTGGHGDALKYVTGTFDSEIPCSLCEKHTRPVCAHTTVHRLRQRMPRFGQATRQPIGVFGTMNSQYSDCDPLGNYAPYLILRKPGDQTEAAKATMQDTYRATLERLFIDLEQERLLDRGAPCSSEGLSSVIVDHPTFRRILDTLRARIEQTTTQFMKVLVETRDYKIREGLSEATHSMALTFDPYSGAFCPITNFLVKRTHLAVVQDLALSQCHCVFYGQQVEGRNFRNQFQPVLRRRFVDLFNGGFISTRSITVTLSEGPVSAPNPTLGQDAPAGRTFDGDLARVSVEVIRDIRVKNRVVFSGNCTNLSEAARARLVGLASAYQRQEKRVDMLHGALGFLLKQFHGLLFPRGMPPNSKSPNPQWFWTLLQRNQMPADKLTHEEITTIAAVKRFTEEYAAINFINLPPTCIGELAQFYMANLILKYCDHSQYLINTLTSIITGARRPRDPSSVLHWIRKDVTSAADIETQAKALLEKTENLPELWTTAFTSTHLVRAAMNQRPMVVLGISISKYHGAAGNNRVFQAGNWSGLNGGKNVCPLFTFDRTRRFIIACPRGGFICPVTGPSSGNRETTLSDQVRGIIVSGGAMVQLAIYATVVRAVGARAQHMAFDDWLSLTDDEFLARDLEELHDQIIQTLETPWTVEGALEAVKILDEKTTAGDGETPTNLAFNFDSCEPSHDTTSNVLNISGSNISGSTVPGLKRPPEDDELFDLSGIPIKHGNITMEMI.

Residues 289 to 314 form a disordered region; that stretch reads SGTTTARGARRNDVNSTSKPSPSGGF. A zinc finger spans residues 497–510; the sequence is CSLCEKHTRPVCAH. 2 consecutive short sequence motifs (required for filament formation) follow at residues 841-842 and 1146-1148; these read FW and FNF. The required for nuclear localization stretch occupies residues 1177–1204; it reads LKRPPEDDELFDLSGIPIKHGNITMEMI.

It belongs to the herpesviridae major DNA-binding protein family. As to quaternary structure, homooligomers. Forms double-helical filaments necessary for the formation of replication compartments within the host nucleus. Interacts with the origin-binding protein. Interacts with the helicase primase complex; this interaction stimulates primer synthesis activity of the helicase-primase complex. Interacts with the DNA polymerase. Interacts with the alkaline exonuclease; this interaction increases its nuclease processivity.

The protein localises to the host nucleus. In terms of biological role, plays several crucial roles in viral infection. Participates in the opening of the viral DNA origin to initiate replication by interacting with the origin-binding protein. May disrupt loops, hairpins and other secondary structures present on ssDNA to reduce and eliminate pausing of viral DNA polymerase at specific sites during elongation. Promotes viral DNA recombination by performing strand-transfer, characterized by the ability to transfer a DNA strand from a linear duplex to a complementary single-stranded DNA circle. Can also catalyze the renaturation of complementary single strands. Additionally, reorganizes the host cell nucleus, leading to the formation of prereplicative sites and replication compartments. This process is driven by the protein which can form double-helical filaments in the absence of DNA. In Homo sapiens (Human), this protein is Major DNA-binding protein.